We begin with the raw amino-acid sequence, 161 residues long: Small ribosomal subunit protein uS9 (161 aa).

2 disordered regions span residues 1–28 (MAQI…PKAP) and 142–161 (KERK…FSKR).

It belongs to the universal ribosomal protein uS9 family.

This chain is Small ribosomal subunit protein uS9, found in Clavibacter sepedonicus (Clavibacter michiganensis subsp. sepedonicus).